Here is a 2217-residue protein sequence, read N- to C-terminus: MSTARFKRGNGQAGSLSNGYAVTAQQLLQAAKVDDIDAMMGFERYVPPQYNGRVDPDRLDQVPGRTGWLVNMHPTLISEEIASGGGSDYNPSAAGIAGVDFYFLDEEGGSFKSSITYDPYFFVTVTDDARLNDVEEFLKKYLETCLKDISTLKKEDLKLDNHLLGLQKSLIKLSFVNSNQLFEARKLLRPILAENESNKQQRNVFKHSNISNGNGMLSSNVNRFASSSVQDKKDAKQYIEDIREYDVPYHVRVSIDKDIRVGKWYKVTHEGFFVWPDKVAFADPVVLAFDIETTKAPLKFPEASVDQVMMISYMIDGDGFLITNREIISEDIEDFEYTPKPELQGHVTIFNEVDELAVLQRFFEHIRDVRPTVISTFNGDFFDWPFIEKRASVRGLDMFEEIGFAPDSEGEYKSSYCVHMDCFRWVKRDSYLPQGSQGLKAVTQAKLGYNPIELDPELMTPYAYERPQQLSEYSVSDAVATYYLYMKYVHPFIFSLCTIIPLNPDEVLRKGTGTLCEMLLMVQAYQGNILLPNKHTDPLERFYDGHLLESETYVGGHVESLEAGVFRSDLATEFKIDTSAIDELIEDLPHALKFAVEVENKAKMEDVTNFEEIKEQIKEQLLELKENNKRHEKPLIYHVDVASMYPNIMTTNRLQPDSIKTEKDCASCDFNRPGKSCARRLKWAWRGEFYPAKSDEYNMIKRALQNETFPNKNKFSKKPYLTFDELSYSEQVAHIKKRLTEYSKKVYHRIKVSEIVEREAIVCQRENPFYVNTVKSFRDRRYEFKGLAKKWKGKMSSIDRNDKHGKDEANKMVVLYDSLQLAHKVILNSFYGYVMRKGSRWYSMEMAGITCLTGATIIQMARALVERVGRPLELDTDGIWCILPKSFPENFFLKLENGKKLFVSYPCSMLNYRVHQKFTNHQYQELVDPVKHKYETHSENTIFFEVDGPYKAMILPTSKEEGKGIKKRYAVFNEDGSLAELKGFELKRRGELQLIKNFQSDIFKVFLDGKTLEECYASVAAVSNRWLDILDNKGSMLEDEDLVSLICENRSMSKSLKEYEGQKSTSITTAKRLGEFLGEDMVKDKGLQCKYIISSKPHGAPVTERAIPVAIFSSDINVKRSFLRRWTMDHSLDNFDIRTILDWGYYRERLASVIQKIITIPAALQNVPNPVPRVEHPDWLKRRIAVKEDKFKQSKLERFLSKSSQEPQNRRIKDIEELFHEDDDIKRIKLAKVTSRNKNKRNRDVQKNDEESLVLPATMPSMEEDYVSWLSYQKIKWKIQRRDRIRRTQLFGKSGETNSRSVLGSMIRKQAEMFANGSWEVLQYRDNYEAGAVDAYVIINGKVQVLKIYVPRTLYINFKTDSVPLKKIKNCEVERSNAILPNDARINNDSASPLFKLTLSEQVYLDELEDSGSVLNDESVLGIYESHISPAQKALMDLGTTISFKSKKVGSLGKSLQDGFHLKDLTSVGNDRYLSHFDLNVCYLLHIDTNIDYEFFVIFRSWENKLSIFVKKPSNNAQELLESTIIGIFKEQYHKRKDRITKFNKYINLSDNVDMNSNHYTDKKKLFKAINQEFAMIKEQKGQQVLLLMQSPFPSLIKKNIRYSTQIPIIELSMNILALPQLNWQNVMINKLCSYIISTSYWVSHLVSLSQHSNVPICNINLEKMDFVIDVIYARRLKLDNIILWWNEQSPLPDHGGMENDFDQNTSWIMNDLDFPNINVPDVYDNVVLEVSIENLVVNTILCSTLINEAEGSDLVDMNTVDVSDKPVGNNQGIVQDSFSHDALAVLKSLLKEWWDRALEKNITADLLVNSLVSWVYSTDSKLFDGSLRYHIHNLTKKSLFQLMNEFNELGSFIVSADRNRLLIKTNKISPETCYAYSHYMIKSIRSNPMFTYLDLNIERYWDLLIWMDKYNFSGLSCSQIEEREKQDYTAYSNWQIKYYLPRIYQSEFEDWAMIILDSMVKTKRAFLESSYGTQRATQIVTGLTPQSDTEDISPLSSFSKEIGKPLLQRVNKLFRNQREFILDPGFSEDYAFPILPGSHIKMDDPLLEFIKSLFQILLLSKSTTLEVRQLRKEVLKFLEIREFAKEAEFQNPSDSLVINGILCEYCSYVSDLDLCRDGLDGKFQCPRCDKSINDSLLQEHMIQNLAIEYQTYITQDLRCEKCHTVKRDLMSTNCNCSGNWVCTTKPEKLSNIVKIYKQVAEFYNYSLVKNALESLY.

Zn(2+) contacts are provided by C2104, C2107, C2126, and C2129. The segment at 2104–2129 (CEYCSYVSDLDLCRDGLDGKFQCPRC) adopts a CysA-type zinc-finger fold. The [4Fe-4S] cluster site is built by C2160, C2163, C2175, and C2177. The CysB motif motif lies at 2160-2177 (CEKCHTVKRDLMSTNCNC).

Belongs to the DNA polymerase type-B family. As to quaternary structure, heterotetramer. Consists of 4 subunits: POL2, DPB2, DPB3 and DPB4. It depends on [4Fe-4S] cluster as a cofactor.

Its subcellular location is the nucleus. It carries out the reaction DNA(n) + a 2'-deoxyribonucleoside 5'-triphosphate = DNA(n+1) + diphosphate. Its function is as follows. DNA polymerase II participates in chromosomal DNA replication. The polypeptide is DNA polymerase epsilon catalytic subunit A (POL2) (Candida glabrata (strain ATCC 2001 / BCRC 20586 / JCM 3761 / NBRC 0622 / NRRL Y-65 / CBS 138) (Yeast)).